The chain runs to 189 residues: Peptidyl-tRNA hydrolase (189 aa).

Tyr-14 contacts tRNA. The active-site Proton acceptor is His-19. Residues Phe-64, Asn-66, and Asn-112 each coordinate tRNA.

Belongs to the PTH family. As to quaternary structure, monomer.

It localises to the cytoplasm. The enzyme catalyses an N-acyl-L-alpha-aminoacyl-tRNA + H2O = an N-acyl-L-amino acid + a tRNA + H(+). In terms of biological role, hydrolyzes ribosome-free peptidyl-tRNAs (with 1 or more amino acids incorporated), which drop off the ribosome during protein synthesis, or as a result of ribosome stalling. Its function is as follows. Catalyzes the release of premature peptidyl moieties from peptidyl-tRNA molecules trapped in stalled 50S ribosomal subunits, and thus maintains levels of free tRNAs and 50S ribosomes. The sequence is that of Peptidyl-tRNA hydrolase from Sphingopyxis alaskensis (strain DSM 13593 / LMG 18877 / RB2256) (Sphingomonas alaskensis).